The following is a 347-amino-acid chain: S-adenosylmethionine:tRNA ribosyltransferase-isomerase (347 aa).

This sequence belongs to the QueA family. In terms of assembly, monomer.

Its subcellular location is the cytoplasm. The catalysed reaction is 7-aminomethyl-7-carbaguanosine(34) in tRNA + S-adenosyl-L-methionine = epoxyqueuosine(34) in tRNA + adenine + L-methionine + 2 H(+). Its pathway is tRNA modification; tRNA-queuosine biosynthesis. Its function is as follows. Transfers and isomerizes the ribose moiety from AdoMet to the 7-aminomethyl group of 7-deazaguanine (preQ1-tRNA) to give epoxyqueuosine (oQ-tRNA). The sequence is that of S-adenosylmethionine:tRNA ribosyltransferase-isomerase from Streptococcus thermophilus (strain CNRZ 1066).